The following is a 61-amino-acid chain: Alpha-conotoxin-like Lp1.6a (61 aa).

Residues 1–21 (MGMRMMFIIFLFVVLATTVVS) form the signal peptide. Positions 22-44 (FTSGRASDGRNAPANNKVSDLIR) are excised as a propeptide. Glutamine 45 carries the post-translational modification Pyrrolidone carboxylic acid. 2 disulfides stabilise this stretch: cysteine 47-cysteine 53 and cysteine 48-cysteine 60. At cysteine 60 the chain carries Cysteine amide.

The protein belongs to the conotoxin A superfamily. Expressed by the venom duct.

It localises to the secreted. Its function is as follows. Alpha-conotoxins act on postsynaptic membranes, they bind to the nicotinic acetylcholine receptors (nAChR) and thus inhibit them. The protein is Alpha-conotoxin-like Lp1.6a of Conus leopardus (Leopard cone).